The following is a 484-amino-acid chain: ATP synthase subunit beta (484 aa).

168-175 (GGAGVGKT) contacts ATP.

The protein belongs to the ATPase alpha/beta chains family. F-type ATPases have 2 components, CF(1) - the catalytic core - and CF(0) - the membrane proton channel. CF(1) has five subunits: alpha(3), beta(3), gamma(1), delta(1), epsilon(1). CF(0) has three main subunits: a(1), b(2) and c(9-12). The alpha and beta chains form an alternating ring which encloses part of the gamma chain. CF(1) is attached to CF(0) by a central stalk formed by the gamma and epsilon chains, while a peripheral stalk is formed by the delta and b chains.

It is found in the cell membrane. The enzyme catalyses ATP + H2O + 4 H(+)(in) = ADP + phosphate + 5 H(+)(out). Its function is as follows. Produces ATP from ADP in the presence of a proton gradient across the membrane. The catalytic sites are hosted primarily by the beta subunits. The protein is ATP synthase subunit beta of Arthrobacter sp. (strain FB24).